Consider the following 544-residue polypeptide: WD repeat-containing protein 25 (544 aa).

Disordered regions lie at residues 17–74 (DSDS…EDPG) and 183–208 (QRQA…GRAP). Polar residues predominate over residues 30-39 (FNATGQQKDT). WD repeat units lie at residues 244-286 (GHRG…HCLQ), 290-329 (LHTE…QLFS), 330-373 (GRSD…RSYK), 375-420 (TIQQ…KISN), 424-463 (HERF…RMSR), 469-510 (GHKV…RACT), and 513-544 (GHTQ…KIWH).

As to expression, expressed in heart, muscle, testis, ovary, uterus and prostate.

The protein is WD repeat-containing protein 25 of Homo sapiens (Human).